The chain runs to 429 residues: Glutamyl-tRNA reductase (429 aa).

Substrate-binding positions include Thr52–Arg55, Ser110, Glu115–Gln117, and Gln121. Cys53 serves as the catalytic Nucleophile. Gly190–Ile195 is a binding site for NADP(+).

The protein belongs to the glutamyl-tRNA reductase family. Homodimer.

It catalyses the reaction (S)-4-amino-5-oxopentanoate + tRNA(Glu) + NADP(+) = L-glutamyl-tRNA(Glu) + NADPH + H(+). Its pathway is porphyrin-containing compound metabolism; protoporphyrin-IX biosynthesis; 5-aminolevulinate from L-glutamyl-tRNA(Glu): step 1/2. Its function is as follows. Catalyzes the NADPH-dependent reduction of glutamyl-tRNA(Glu) to glutamate 1-semialdehyde (GSA). In Verminephrobacter eiseniae (strain EF01-2), this protein is Glutamyl-tRNA reductase.